Here is a 289-residue protein sequence, read N- to C-terminus: Carbonyl reductase [NADPH] 1 (289 aa).

Serine 2 is subject to N-acetylserine. Phosphoserine is present on serine 2. NADP(+) is bound by residues 10-34 (VTGA…GDVV), 63-64 (DI), and asparagine 90. Glutathione is bound by residues 95-97 (FQL) and glutamine 106. Serine 140 is a binding site for substrate. Glutathione is bound at residue 193–194 (TY). Tyrosine 194 serves as the catalytic Proton acceptor. NADP(+)-binding positions include 194–198 (YGVTK) and 231–233 (VRT). The residue at position 239 (lysine 239) is an N6-1-carboxyethyl lysine.

This sequence belongs to the short-chain dehydrogenases/reductases (SDR) family. Monomer. Expressed in kidney (at protein level).

The protein resides in the cytoplasm. The catalysed reaction is a secondary alcohol + NADP(+) = a ketone + NADPH + H(+). The enzyme catalyses prostaglandin E1 + NADP(+) = 15-oxoprostaglandin E1 + NADPH + H(+). It carries out the reaction prostaglandin F2alpha + NADP(+) = prostaglandin E2 + NADPH + H(+). It catalyses the reaction prostaglandin D2 + NADP(+) = 15-oxoprostaglandin D2 + NADPH + H(+). The catalysed reaction is prostaglandin E2 + NADP(+) = 15-oxoprostaglandin E2 + NADPH + H(+). The enzyme catalyses prostaglandin F2alpha + NADP(+) = 15-oxoprostaglandin F2alpha + NADPH + H(+). It carries out the reaction menadione + NADPH + H(+) = menadiol + NADP(+). It catalyses the reaction daunorubicin + NADPH + H(+) = 13-dihydrodaunorubicin + NADP(+). The catalysed reaction is S-nitrosoglutathione + NADPH + H(+) = S-(hydroxysulfenamide)glutathione + NADP(+). The enzyme catalyses a primary alcohol + NADP(+) = an aldehyde + NADPH + H(+). It carries out the reaction cortisol + NADPH + H(+) = 20beta-dihydrocortisol + NADP(+). It catalyses the reaction corticosterone + NADPH + H(+) = 20beta-dihydrocorticosterone + NADP(+). Its function is as follows. NADPH-dependent reductase with broad substrate specificity. Catalyzes the reduction of a wide variety of carbonyl compounds including quinones, prostaglandins, menadione, plus various xenobiotics. Catalyzes the reduction of the antitumor anthracyclines doxorubicin and daunorubicin to the cardiotoxic compounds doxorubicinol and daunorubicinol. Can convert prostaglandin E2 to prostaglandin F2-alpha. Can bind glutathione, which explains its higher affinity for glutathione-conjugated substrates. Catalyzes the reduction of S-nitrosoglutathione. In addition, participates in the glucocorticoid metabolism by catalyzing the NADPH-dependent cortisol/corticosterone into 20beta-dihydrocortisol (20b-DHF) or 20beta-corticosterone (20b-DHB), which are weak agonists of NR3C1 and NR3C2 in adipose tissue. This chain is Carbonyl reductase [NADPH] 1, found in Sus scrofa (Pig).